Here is a 297-residue protein sequence, read N- to C-terminus: Phosphoribosylaminoimidazole-succinocarboxamide synthase (297 aa).

The protein belongs to the SAICAR synthetase family.

The catalysed reaction is 5-amino-1-(5-phospho-D-ribosyl)imidazole-4-carboxylate + L-aspartate + ATP = (2S)-2-[5-amino-1-(5-phospho-beta-D-ribosyl)imidazole-4-carboxamido]succinate + ADP + phosphate + 2 H(+). The protein operates within purine metabolism; IMP biosynthesis via de novo pathway; 5-amino-1-(5-phospho-D-ribosyl)imidazole-4-carboxamide from 5-amino-1-(5-phospho-D-ribosyl)imidazole-4-carboxylate: step 1/2. In Mycobacterium ulcerans (strain Agy99), this protein is Phosphoribosylaminoimidazole-succinocarboxamide synthase.